A 360-amino-acid polypeptide reads, in one-letter code: Xanthohumol 4-O-methyltransferase (360 aa).

S-adenosyl-L-methionine is bound at residue aspartate 227. Catalysis depends on histidine 266, which acts as the Proton acceptor.

This sequence belongs to the class I-like SAM-binding methyltransferase superfamily. Cation-independent O-methyltransferase family. Homodimer. As to expression, highly expressed in lupulin glands. Detected in cones, male flowers and roots.

The protein localises to the cytoplasm. The enzyme catalyses xanthohumol + S-adenosyl-L-methionine = 4-O-methylxanthohumol + S-adenosyl-L-homocysteine + H(+). It carries out the reaction desmethylxanthohumol + S-adenosyl-L-methionine = xanthohumol + S-adenosyl-L-homocysteine + H(+). It catalyses the reaction isoliquiritigenin + S-adenosyl-L-methionine = 2'-O-methylisoliquiritigenin + S-adenosyl-L-homocysteine + H(+). The catalysed reaction is trans-resveratrol + S-adenosyl-L-methionine = 3-methoxy-4',5-dihydroxy-trans-stilbene + S-adenosyl-L-homocysteine + H(+). The protein operates within secondary metabolite biosynthesis. With respect to regulation, inhibited by S-adenosyl homocysteine. In terms of biological role, involved in the biosynthesis of prenylated phenolics natural products which contribute to the bitter taste of beer and display broad biological activities. O-methyltransferase with a low substrate selectivity. Methylates chalconaringenin, desmethylxanthohumol, xanthohumol, isoliquiritigenin, butein, 2',4-dihydroxychalcone, resveratrol, genistein and guaiacol. Catalyzes the biosynthesis of 2',4'-dihydroxy-4,6'-dimethoxy-3'-prenylchalcone (4-O-methylxanthohumol). In Humulus lupulus (European hop), this protein is Xanthohumol 4-O-methyltransferase.